Reading from the N-terminus, the 298-residue chain is GTPase Era (298 aa).

In terms of domain architecture, Era-type G spans 3–170 (KSGFVAILGR…VQLLKDNLEE (168 aa)). Residues 11–18 (GRPNVGKS) are G1. 11–18 (GRPNVGKS) serves as a coordination point for GTP. Residues 37-41 (QTTRN) are G2. The tract at residues 58 to 61 (DTPG) is G3. Residues 58–62 (DTPGI) and 120–123 (NKID) contribute to the GTP site. The tract at residues 120 to 123 (NKID) is G4. The segment at 149–151 (ISA) is G5. In terms of domain architecture, KH type-2 spans 201–279 (TQQEVPHSVA…YLETWVKVKK (79 aa)).

This sequence belongs to the TRAFAC class TrmE-Era-EngA-EngB-Septin-like GTPase superfamily. Era GTPase family. As to quaternary structure, monomer.

It localises to the cytoplasm. Its subcellular location is the cell membrane. Its function is as follows. An essential GTPase that binds both GDP and GTP, with rapid nucleotide exchange. Plays a role in 16S rRNA processing and 30S ribosomal subunit biogenesis and possibly also in cell cycle regulation and energy metabolism. The polypeptide is GTPase Era (Streptococcus equi subsp. zooepidemicus (strain MGCS10565)).